Consider the following 145-residue polypeptide: Histone H2B.10 (145 aa).

Residues 1–15 (MAKADKKPAEKKPAE) are compositionally biased toward basic and acidic residues. Residues 1-53 (MAKADKKPAEKKPAEKTPAAEPAAAAEKKPKAGKKLPKEPAGAGDKKKKRSKK) are disordered. At Lys3 the chain carries N6-methyllysine. Lys6 and Lys11 each carry N6-acetyllysine. Lys12 carries the post-translational modification N6,N6-dimethyllysine. N6-acetyllysine is present on residues Lys16, Lys28, and Lys34. Positions 16–25 (KTPAAEPAAA) are enriched in low complexity. N6-acetyllysine; partial is present on Lys35. Residue Lys141 forms a Glycyl lysine isopeptide (Lys-Gly) (interchain with G-Cter in ubiquitin) linkage.

This sequence belongs to the histone H2B family. In terms of assembly, the nucleosome is a histone octamer containing two molecules each of H2A, H2B, H3 and H4 assembled in one H3-H4 heterotetramer and two H2A-H2B heterodimers. The octamer wraps approximately 147 bp of DNA. Interacts with ORTH2. Post-translationally, can be acetylated to form H2BK5ac, H2BK10ac, H2BK15ac, H2BK27ac, H2BK33ac and H2BK34ac. Dimethylated to form H2BK11me2. In terms of processing, monoubiquitinated by BRE1 to form H2BK143ub1 and deubiquitinated by UBP26. Required for heterochromatic histone H3 di- and trimethylation at H3K4me. May give a specific tag for epigenetic transcriptional activation.

The protein resides in the nucleus. Its subcellular location is the chromosome. Its function is as follows. Core component of nucleosome. Nucleosomes wrap and compact DNA into chromatin, limiting DNA accessibility to the cellular machineries which require DNA as a template. Histones thereby play a central role in transcription regulation, DNA repair, DNA replication and chromosomal stability. DNA accessibility is regulated via a complex set of post-translational modifications of histones, also called histone code, and nucleosome remodeling. The polypeptide is Histone H2B.10 (Arabidopsis thaliana (Mouse-ear cress)).